The following is a 285-amino-acid chain: Sulfotransferase 2A1 (285 aa).

Positions 44, 45, 46, 47, 48, and 49 each coordinate 3'-phosphoadenylyl sulfate. Residue His99 is the Proton acceptor of the active site. 3'-phosphoadenylyl sulfate contacts are provided by Arg121, Ser129, Tyr184, Ser218, Met223, Arg247, Lys248, and Gly249. Ser251 is modified (phosphoserine).

It belongs to the sulfotransferase 1 family. As to quaternary structure, homodimer. As to expression, predominanly expressed in liver. Detected also in adrenal gland and in jejunum.

It is found in the cytoplasm. It localises to the cytosol. The catalysed reaction is an alcohol + 3'-phosphoadenylyl sulfate = an alkyl sulfate + adenosine 3',5'-bisphosphate + H(+). It catalyses the reaction 3beta-hydroxyandrost-5-en-17-one + 3'-phosphoadenylyl sulfate = dehydroepiandrosterone 3-sulfate + adenosine 3',5'-bisphosphate + H(+). The enzyme catalyses taurolithocholate + 3'-phosphoadenylyl sulfate = taurolithocholate 3-sulfate + adenosine 3',5'-bisphosphate + H(+). It carries out the reaction lithocholate + 3'-phosphoadenylyl sulfate = lithocholate sulfate + adenosine 3',5'-bisphosphate + H(+). The catalysed reaction is (24S)-hydroxycholesterol + 3'-phosphoadenylyl sulfate = (24S)-hydroxycholesterol 24-sulfate + adenosine 3',5'-bisphosphate + H(+). It catalyses the reaction (24S)-hydroxycholesterol + 3'-phosphoadenylyl sulfate = (24S)-hydroxycholesterol 3-sulfate + adenosine 3',5'-bisphosphate + H(+). The enzyme catalyses (24S)-hydroxycholesterol 24-sulfate + 3'-phosphoadenylyl sulfate = (24S)-hydroxycholesterol 3,24-disulfate + adenosine 3',5'-bisphosphate + H(+). It carries out the reaction pregnenolone + 3'-phosphoadenylyl sulfate = pregnenolone sulfate + adenosine 3',5'-bisphosphate + H(+). The catalysed reaction is androsterone + 3'-phosphoadenylyl sulfate = androsterone 3alpha-sulfate + adenosine 3',5'-bisphosphate + H(+). In terms of biological role, sulfotransferase that utilizes 3'-phospho-5'-adenylyl sulfate (PAPS) as sulfonate donor to catalyze the sulfonation of steroids and bile acids in the liver and adrenal glands. Mediates the sulfation of a wide range of steroids and sterols, including pregnenolone, androsterone, DHEA, bile acids, cholesterol and as well many xenobiotics that contain alcohol and phenol functional groups. Sulfonation increases the water solubility of most compounds, and therefore their renal excretion, but it can also result in bioactivation to form active metabolites. Plays an important role in maintening steroid and lipid homeostasis. Plays a key role in bile acid metabolism. In addition, catalyzes the metabolic activation of potent carcinogenic polycyclic arylmethanols. In Macaca fascicularis (Crab-eating macaque), this protein is Sulfotransferase 2A1 (SULT2A1).